A 136-amino-acid polypeptide reads, in one-letter code: Histone H3 (136 aa).

The interval 1–42 (MARTKQTARKSTGGKAPRKQIAAKAARKAAPSTGGVKKPHRY) is disordered. Lysine 5 carries the N6,N6,N6-trimethyllysine; alternate modification. Lysine 5 bears the N6,N6-dimethyllysine; alternate mark. Lysine 5 and lysine 10 each carry N6-methyllysine; alternate. Position 10 is an N6-acetyllysine; alternate (lysine 10). Serine 11 bears the Phosphoserine mark. The residue at position 15 (lysine 15) is an N6,N6-dimethyllysine; alternate. N6-acetyllysine; alternate occurs at positions 15, 19, 24, 28, and 37. Residues lysine 19, lysine 24, lysine 28, and lysine 37 each carry the N6-methyllysine; alternate modification. Positions 19–31 (KQIAAKAARKAAP) are enriched in low complexity. N6,N6,N6-trimethyllysine; alternate is present on residues lysine 28 and lysine 37. 2 positions are modified to N6,N6-dimethyllysine; alternate: lysine 28 and lysine 37. Lysine 57 and lysine 65 each carry N6-acetyllysine. At lysine 80 the chain carries N6,N6,N6-trimethyllysine; alternate. Lysine 80 carries the N6,N6-dimethyllysine; alternate modification. N6-methyllysine; alternate is present on lysine 80.

The protein belongs to the histone H3 family. The nucleosome is a histone octamer containing two molecules each of H2A, H2B, H3 and H4 assembled in one H3-H4 heterotetramer and two H2A-H2B heterodimers. The octamer wraps approximately 147 bp of DNA. Post-translationally, phosphorylated to form H3S10ph. H3S10ph promotes subsequent H3K14ac formation and is required for transcriptional activation through TBP recruitment to the promoters. Mono-, di- and trimethylated by the COMPASS complex to form H3K4me1/2/3. H3K4me activates gene expression by regulating transcription elongation and plays a role in telomere length maintenance. H3K4me enrichment correlates with transcription levels, and occurs in a 5' to 3' gradient with H3K4me3 enrichment at the 5'-end of genes, shifting to H3K4me2 and then H3K4me1. Methylated by SET2 to form H3K36me. H3K36me represses gene expression. Methylated by DOT1 to form H3K79me. H3K79me is required for association of SIR proteins with telomeric regions and for telomeric silencing. The COMPASS-mediated formation of H3K4me2/3 and the DOT1-mediated formation of H3K79me require H2BK123ub1. In terms of processing, acetylation of histone H3 leads to transcriptional activation. H3K14ac formation by GCN5 is promoted by H3S10ph. H3K14ac can also be formed by ESA1. H3K56ac formation occurs predominantly in newly synthesized H3 molecules during G1, S and G2/M of the cell cycle and may be involved in DNA repair.

It localises to the nucleus. Its subcellular location is the chromosome. Functionally, core component of nucleosome. Nucleosomes wrap and compact DNA into chromatin, limiting DNA accessibility to the cellular machineries which require DNA as a template. Histones thereby play a central role in transcription regulation, DNA repair, DNA replication and chromosomal stability. DNA accessibility is regulated via a complex set of post-translational modifications of histones, also called histone code, and nucleosome remodeling. This is Histone H3 (HHT1) from Coccidioides immitis (strain RS) (Valley fever fungus).